Consider the following 120-residue polypeptide: Ribosome-binding factor A (120 aa).

It belongs to the RbfA family. In terms of assembly, monomer. Binds 30S ribosomal subunits, but not 50S ribosomal subunits or 70S ribosomes.

The protein resides in the cytoplasm. Functionally, one of several proteins that assist in the late maturation steps of the functional core of the 30S ribosomal subunit. Associates with free 30S ribosomal subunits (but not with 30S subunits that are part of 70S ribosomes or polysomes). Required for efficient processing of 16S rRNA. May interact with the 5'-terminal helix region of 16S rRNA. The polypeptide is Ribosome-binding factor A (Desulforamulus reducens (strain ATCC BAA-1160 / DSM 100696 / MI-1) (Desulfotomaculum reducens)).